Reading from the N-terminus, the 233-residue chain is Phosphatidylserine decarboxylase proenzyme (233 aa).

S190 acts as the Schiff-base intermediate with substrate; via pyruvic acid in catalysis. S190 is subject to Pyruvic acid (Ser); by autocatalysis.

Belongs to the phosphatidylserine decarboxylase family. PSD-A subfamily. In terms of assembly, heterodimer of a large membrane-associated beta subunit and a small pyruvoyl-containing alpha subunit. Pyruvate is required as a cofactor. In terms of processing, is synthesized initially as an inactive proenzyme. Formation of the active enzyme involves a self-maturation process in which the active site pyruvoyl group is generated from an internal serine residue via an autocatalytic post-translational modification. Two non-identical subunits are generated from the proenzyme in this reaction, and the pyruvate is formed at the N-terminus of the alpha chain, which is derived from the carboxyl end of the proenzyme. The post-translation cleavage follows an unusual pathway, termed non-hydrolytic serinolysis, in which the side chain hydroxyl group of the serine supplies its oxygen atom to form the C-terminus of the beta chain, while the remainder of the serine residue undergoes an oxidative deamination to produce ammonia and the pyruvoyl prosthetic group on the alpha chain.

The protein resides in the cell membrane. The catalysed reaction is a 1,2-diacyl-sn-glycero-3-phospho-L-serine + H(+) = a 1,2-diacyl-sn-glycero-3-phosphoethanolamine + CO2. The protein operates within phospholipid metabolism; phosphatidylethanolamine biosynthesis; phosphatidylethanolamine from CDP-diacylglycerol: step 2/2. Catalyzes the formation of phosphatidylethanolamine (PtdEtn) from phosphatidylserine (PtdSer). This Azorhizobium caulinodans (strain ATCC 43989 / DSM 5975 / JCM 20966 / LMG 6465 / NBRC 14845 / NCIMB 13405 / ORS 571) protein is Phosphatidylserine decarboxylase proenzyme.